Here is a 186-residue protein sequence, read N- to C-terminus: Ribosome-recycling factor (186 aa).

The protein belongs to the RRF family.

The protein localises to the cytoplasm. Functionally, responsible for the release of ribosomes from messenger RNA at the termination of protein biosynthesis. May increase the efficiency of translation by recycling ribosomes from one round of translation to another. The sequence is that of Ribosome-recycling factor from Limosilactobacillus reuteri (Lactobacillus reuteri).